Consider the following 616-residue polypeptide: MALLQISEPGLSAAPHQRRLAAGIDLGTTNSLVATVRSGQAETLADAEGRDLLPSVVHYQADTLRVGWDARQQAAQDPANTISSVKRMMGRSLADVLARYPNLPYQFQASDNGLPMMLTAAGAVNPVGVSADILRALAERAKTALEGDLDGVVITVPAYFDDAQRQGTKDAARLAGLHVLRLLNEPTAAAIAYGLDSGQEGIIAVYDLGGGTFDISILRLSRGVFEVLATGGDSALGGDDFDHLLADWLREQAGVADRSDHGVQRQLLDAAIAAKVALSDADSTVVEIAGWQGEVTRAQFDALIATLVKRTLMACRRALKDAGVSAEEVLEVVMVGGSTRVPLVREQVGTFFGRTPLTSIDPDKVVAIGAAIQADILVGNKPDSDMLLLDVIPLSLGLETMGGLVEKVIPRNTTIPVARAQEFTTFKDGQSAMMIHVLQGERELVQDCRSLARFSLRGLPPLPAGGAHIRVTFQVDADGLLSVTAMEKSTGVEASIQVKPSYGLSDAEIAGMIKDSMANAQSDVGARMLAEQRVEASRVLESLQGALASDAALLSEAESTAIPAAVEALQQATQGTDPAAIEAAIKTLDAQTQDFAARRMDASIRRALAGHSVDEV.

The protein belongs to the heat shock protein 70 family.

In terms of biological role, chaperone involved in the maturation of iron-sulfur cluster-containing proteins. Has a low intrinsic ATPase activity which is markedly stimulated by HscB. Involved in the maturation of IscU. The polypeptide is Chaperone protein HscA (Serratia proteamaculans (strain 568)).